Reading from the N-terminus, the 102-residue chain is uncharacterized protein (102 aa).

This is an uncharacterized protein from Homo sapiens (Human).